Here is a 792-residue protein sequence, read N- to C-terminus: Probable beta-D-xylosidase 6 (792 aa).

The signal sequence occupies residues 1–18; it reads MNLQLTLISLLFFTSAIA. 4 N-linked (GlcNAc...) asparagine glycosylation sites follow: N44, N104, N124, and N239. D309 is a catalytic residue. N-linked (GlcNAc...) asparagine glycosylation is found at N444 and N618.

This sequence belongs to the glycosyl hydrolase 3 family.

The protein resides in the secreted. It is found in the extracellular space. The protein localises to the extracellular matrix. This Arabidopsis thaliana (Mouse-ear cress) protein is Probable beta-D-xylosidase 6 (BXL6).